We begin with the raw amino-acid sequence, 54 residues long: Photosystem II reaction center protein K (54 aa).

Positions methionine 1 to alanine 17 are excised as a propeptide. The helical transmembrane segment at leucine 33–phenylalanine 53 threads the bilayer.

This sequence belongs to the PsbK family. As to quaternary structure, PSII is composed of 1 copy each of membrane proteins PsbA, PsbB, PsbC, PsbD, PsbE, PsbF, PsbH, PsbI, PsbJ, PsbK, PsbL, PsbM, PsbT, PsbY, PsbZ, Psb30/Ycf12, at least 3 peripheral proteins of the oxygen-evolving complex and a large number of cofactors. It forms dimeric complexes.

Its subcellular location is the plastid. It is found in the chloroplast thylakoid membrane. Functionally, one of the components of the core complex of photosystem II (PSII). PSII is a light-driven water:plastoquinone oxidoreductase that uses light energy to abstract electrons from H(2)O, generating O(2) and a proton gradient subsequently used for ATP formation. It consists of a core antenna complex that captures photons, and an electron transfer chain that converts photonic excitation into a charge separation. The protein is Photosystem II reaction center protein K of Euglena deses.